The chain runs to 327 residues: Phenylalanine--tRNA ligase alpha subunit (327 aa).

Glu252 provides a ligand contact to Mg(2+).

It belongs to the class-II aminoacyl-tRNA synthetase family. Phe-tRNA synthetase alpha subunit type 1 subfamily. In terms of assembly, tetramer of two alpha and two beta subunits. Mg(2+) is required as a cofactor.

The protein localises to the cytoplasm. It carries out the reaction tRNA(Phe) + L-phenylalanine + ATP = L-phenylalanyl-tRNA(Phe) + AMP + diphosphate + H(+). The protein is Phenylalanine--tRNA ligase alpha subunit of Vibrio parahaemolyticus serotype O3:K6 (strain RIMD 2210633).